The sequence spans 379 residues: ATP phosphoribosyltransferase regulatory subunit (379 aa).

This sequence belongs to the class-II aminoacyl-tRNA synthetase family. HisZ subfamily. As to quaternary structure, heteromultimer composed of HisG and HisZ subunits.

The protein localises to the cytoplasm. It functions in the pathway amino-acid biosynthesis; L-histidine biosynthesis; L-histidine from 5-phospho-alpha-D-ribose 1-diphosphate: step 1/9. Functionally, required for the first step of histidine biosynthesis. May allow the feedback regulation of ATP phosphoribosyltransferase activity by histidine. This chain is ATP phosphoribosyltransferase regulatory subunit, found in Caldanaerobacter subterraneus subsp. tengcongensis (strain DSM 15242 / JCM 11007 / NBRC 100824 / MB4) (Thermoanaerobacter tengcongensis).